A 209-amino-acid polypeptide reads, in one-letter code: Large ribosomal subunit protein uL3 (209 aa).

An N5-methylglutamine modification is found at glutamine 150.

Belongs to the universal ribosomal protein uL3 family. Part of the 50S ribosomal subunit. Forms a cluster with proteins L14 and L19. Post-translationally, methylated by PrmB.

Functionally, one of the primary rRNA binding proteins, it binds directly near the 3'-end of the 23S rRNA, where it nucleates assembly of the 50S subunit. The chain is Large ribosomal subunit protein uL3 from Aliivibrio salmonicida (strain LFI1238) (Vibrio salmonicida (strain LFI1238)).